Here is a 95-residue protein sequence, read N- to C-terminus: MVKIRLMRMGRVHYPLYRIVAVDSRVKRNGKYIALIGHLNPALKENKCKLDETVALDWLNKGAIPTDTVRSLFSESGLWKKFIESKNKKETSPKK.

This sequence belongs to the bacterial ribosomal protein bS16 family.

This Mycoplasma genitalium (strain ATCC 33530 / DSM 19775 / NCTC 10195 / G37) (Mycoplasmoides genitalium) protein is Small ribosomal subunit protein bS16.